The sequence spans 449 residues: 3-phosphoshikimate 1-carboxyvinyltransferase (449 aa).

The disordered stretch occupies residues 1-29; the sequence is MSHDSVPSPITARAGTPLRGRLRPPGDKS. Residues lysine 28, serine 29, and arginine 33 each coordinate 3-phosphoshikimate. Lysine 28 lines the phosphoenolpyruvate pocket. The phosphoenolpyruvate site is built by glycine 101 and arginine 129. 3-phosphoshikimate is bound by residues serine 175, glutamine 177, aspartate 330, and lysine 357. Glutamine 177 provides a ligand contact to phosphoenolpyruvate. Catalysis depends on aspartate 330, which acts as the Proton acceptor. Arginine 361 and arginine 405 together coordinate phosphoenolpyruvate.

The protein belongs to the EPSP synthase family. As to quaternary structure, monomer.

It localises to the cytoplasm. The catalysed reaction is 3-phosphoshikimate + phosphoenolpyruvate = 5-O-(1-carboxyvinyl)-3-phosphoshikimate + phosphate. The protein operates within metabolic intermediate biosynthesis; chorismate biosynthesis; chorismate from D-erythrose 4-phosphate and phosphoenolpyruvate: step 6/7. Functionally, catalyzes the transfer of the enolpyruvyl moiety of phosphoenolpyruvate (PEP) to the 5-hydroxyl of shikimate-3-phosphate (S3P) to produce enolpyruvyl shikimate-3-phosphate and inorganic phosphate. In Methylobacterium sp. (strain 4-46), this protein is 3-phosphoshikimate 1-carboxyvinyltransferase.